The following is a 163-amino-acid chain: Flagellar assembly factor FliW (163 aa).

Basic and acidic residues predominate over residues 136–156; that stretch reads PFFETSEKKQSGLQRLERQPE. Positions 136 to 163 are disordered; the sequence is PFFETSEKKQSGLQRLERQPEKSVPPAG.

This sequence belongs to the FliW family. As to quaternary structure, interacts with translational regulator CsrA and flagellin(s).

It localises to the cytoplasm. Its function is as follows. Acts as an anti-CsrA protein, binds CsrA and prevents it from repressing translation of its target genes, one of which is flagellin. Binds to flagellin and participates in the assembly of the flagellum. The protein is Flagellar assembly factor FliW of Geotalea uraniireducens (strain Rf4) (Geobacter uraniireducens).